Reading from the N-terminus, the 307-residue chain is UPF0276 protein Bphyt_5128 (307 aa).

The protein belongs to the UPF0276 family.

The sequence is that of UPF0276 protein Bphyt_5128 from Paraburkholderia phytofirmans (strain DSM 17436 / LMG 22146 / PsJN) (Burkholderia phytofirmans).